The chain runs to 484 residues: uncharacterized protein (484 aa).

This sequence to M.thermoautotrophicum MTH1153.

This is an uncharacterized protein from Methanocaldococcus jannaschii (strain ATCC 43067 / DSM 2661 / JAL-1 / JCM 10045 / NBRC 100440) (Methanococcus jannaschii).